The following is a 503-amino-acid chain: Probable DNA ligase (503 aa).

Glu-210 contributes to the ATP binding site. Lys-212 serves as the catalytic N6-AMP-lysine intermediate. 6 residues coordinate ATP: Arg-217, Arg-232, Glu-261, Phe-296, Arg-367, and Lys-373.

Belongs to the ATP-dependent DNA ligase family. It depends on Mg(2+) as a cofactor.

It catalyses the reaction ATP + (deoxyribonucleotide)n-3'-hydroxyl + 5'-phospho-(deoxyribonucleotide)m = (deoxyribonucleotide)n+m + AMP + diphosphate.. Functionally, DNA ligase that seals nicks in double-stranded DNA during DNA replication, DNA recombination and DNA repair. This Rhodococcus opacus (strain B4) protein is Probable DNA ligase.